A 384-amino-acid chain; its full sequence is 8-amino-7-oxononanoate synthase (384 aa).

Position 21 (R21) interacts with substrate. Pyridoxal 5'-phosphate is bound at residue 108–109 (GF). Position 133 (H133) interacts with substrate. Pyridoxal 5'-phosphate-binding residues include S179, H207, and T233. N6-(pyridoxal phosphate)lysine is present on K236. T352 is a substrate binding site.

This sequence belongs to the class-II pyridoxal-phosphate-dependent aminotransferase family. BioF subfamily. Homodimer. Requires pyridoxal 5'-phosphate as cofactor.

It carries out the reaction 6-carboxyhexanoyl-[ACP] + L-alanine + H(+) = (8S)-8-amino-7-oxononanoate + holo-[ACP] + CO2. Its pathway is cofactor biosynthesis; biotin biosynthesis. In terms of biological role, catalyzes the decarboxylative condensation of pimeloyl-[acyl-carrier protein] and L-alanine to produce 8-amino-7-oxononanoate (AON), [acyl-carrier protein], and carbon dioxide. The protein is 8-amino-7-oxononanoate synthase of Escherichia coli O7:K1 (strain IAI39 / ExPEC).